Here is a 185-residue protein sequence, read N- to C-terminus: Ribosome-recycling factor (185 aa).

The protein belongs to the RRF family.

The protein localises to the cytoplasm. In terms of biological role, responsible for the release of ribosomes from messenger RNA at the termination of protein biosynthesis. May increase the efficiency of translation by recycling ribosomes from one round of translation to another. The polypeptide is Ribosome-recycling factor (Shewanella baltica (strain OS223)).